Consider the following 247-residue polypeptide: 3-deoxy-manno-octulosonate cytidylyltransferase (247 aa).

This sequence belongs to the KdsB family.

It localises to the cytoplasm. It carries out the reaction 3-deoxy-alpha-D-manno-oct-2-ulosonate + CTP = CMP-3-deoxy-beta-D-manno-octulosonate + diphosphate. Its pathway is nucleotide-sugar biosynthesis; CMP-3-deoxy-D-manno-octulosonate biosynthesis; CMP-3-deoxy-D-manno-octulosonate from 3-deoxy-D-manno-octulosonate and CTP: step 1/1. The protein operates within bacterial outer membrane biogenesis; lipopolysaccharide biosynthesis. Activates KDO (a required 8-carbon sugar) for incorporation into bacterial lipopolysaccharide in Gram-negative bacteria. This chain is 3-deoxy-manno-octulosonate cytidylyltransferase, found in Bdellovibrio bacteriovorus (strain ATCC 15356 / DSM 50701 / NCIMB 9529 / HD100).